We begin with the raw amino-acid sequence, 143 residues long: Large ribosomal subunit protein uL16c (143 aa).

The protein belongs to the universal ribosomal protein uL16 family. As to quaternary structure, part of the 50S ribosomal subunit.

The protein localises to the plastid. Its subcellular location is the chloroplast. The polypeptide is Large ribosomal subunit protein uL16c (Spirogyra maxima (Green alga)).